The chain runs to 483 residues: MDLYGYVSCTPRIRHDVLDGLLNVYDPDELCSRDTPFRLYLTRYDCTPEGLRLFLTRGADVNGVRGSRTSPLCTVLSNKDLGNEAEALAKQLIDAGADVNAMAPDGRYPLLCLLENDRINTARFVRYMIDRGTSVYVRGTDGYGPVQTYIHSKNVVLDTLRELVRAGATVHDPDKTYGFNVLQCYMIAHVRSSNVQILRFLLRHGVDSSRGLHATVMFNTLERKISHGVFNRKVLDFIFTQISINEQNSLDFTPINYCVIHNDRRTFDYLLERGADPNVVNFLGNSCLDLAVLNGNKYMVHRLLRKTITPDAYTRALNVVNSNIYSIKSYGMSEFVKRHGTLYKALIRSFVKDSDREIFTYVHIYDYFREFVDECIRERDAMKADVLDAVSVFDTAFGLVARPRWKHVRILSKYVRGVYGDRVKKILRSLHKRRFKTDRLVRRIADLCGPDGLWTRLPVEVRYSVVDYLTDDEIHDLFVKIHA.

ANK repeat units follow at residues 32–63 (SRDT…DVNG), 67–101 (SRTS…DVNA), 105–137 (DGRY…SVYV), 177–210 (YGFN…DSSR), 250–279 (LDFT…DPNV), and 283–312 (LGNS…TPDA). Residues 390–478 (VSVFDTAFGL…LTDDEIHDLF (89 aa)) are PRANC/F-box-like.

Interacts (via PRANC/F-box-like domain) with the SKP1 component of the host SCF ubiquitin ligase complex. Interacts (via N-terminus) with host AKT1.

In terms of biological role, substrate-specific adapter of SKP1-containing E3 ubiquitin-protein ligases which mediate the ubiquitination and subsequent proteasomal degradation of host target proteins including CDKN1B. Disappearance of host CDKN1B correlates with cell cycle progression through the G0/G1 checkpoint. Therefore, viruses in infected cells are protected from diverse innate host antiviral responses normally triggered by G0/G1 cell cycle arrest. In Myxoma virus (strain Lausanne) (MYXV), this protein is Ankyrin repeat domain-containing protein M-T5 (m005R).